Consider the following 198-residue polypeptide: Large ribosomal subunit protein bL25 (198 aa).

It belongs to the bacterial ribosomal protein bL25 family. CTC subfamily. Part of the 50S ribosomal subunit; part of the 5S rRNA/L5/L18/L25 subcomplex. Contacts the 5S rRNA. Binds to the 5S rRNA independently of L5 and L18.

Functionally, this is one of the proteins that binds to the 5S RNA in the ribosome where it forms part of the central protuberance. The sequence is that of Large ribosomal subunit protein bL25 from Bordetella avium (strain 197N).